A 397-amino-acid chain; its full sequence is Argininosuccinate synthase (397 aa).

Residue 7–15 (AFSGGLDTT) coordinates ATP. Position 84 (tyrosine 84) interacts with L-citrulline. ATP is bound at residue glycine 114. L-aspartate-binding residues include threonine 116, asparagine 120, and aspartate 121. An L-citrulline-binding site is contributed by asparagine 120. L-citrulline contacts are provided by arginine 124, serine 170, serine 179, glutamate 254, and tyrosine 266.

The protein belongs to the argininosuccinate synthase family. Type 1 subfamily. Homotetramer.

The protein localises to the cytoplasm. The enzyme catalyses L-citrulline + L-aspartate + ATP = 2-(N(omega)-L-arginino)succinate + AMP + diphosphate + H(+). Its pathway is amino-acid biosynthesis; L-arginine biosynthesis; L-arginine from L-ornithine and carbamoyl phosphate: step 2/3. This chain is Argininosuccinate synthase, found in Haloquadratum walsbyi (strain DSM 16790 / HBSQ001).